The sequence spans 389 residues: tRNA-specific 2-thiouridylase MnmA (389 aa).

ATP contacts are provided by residues 33–40 and L59; that span reads GLSGGVDS. C120 acts as the Nucleophile in catalysis. Residues C120 and C219 are joined by a disulfide bond. ATP is bound at residue G145. The segment at 169–171 is interaction with tRNA; that stretch reads KDQ. C219 (cysteine persulfide intermediate) is an active-site residue. The interval 326–327 is interaction with tRNA; that stretch reads RY.

It belongs to the MnmA/TRMU family.

The protein localises to the cytoplasm. It carries out the reaction S-sulfanyl-L-cysteinyl-[protein] + uridine(34) in tRNA + AH2 + ATP = 2-thiouridine(34) in tRNA + L-cysteinyl-[protein] + A + AMP + diphosphate + H(+). Functionally, catalyzes the 2-thiolation of uridine at the wobble position (U34) of tRNA, leading to the formation of s(2)U34. In Synechococcus sp. (strain WH7803), this protein is tRNA-specific 2-thiouridylase MnmA.